Consider the following 1207-residue polypeptide: DNA-directed RNA polymerase subunit beta' (1207 aa).

Residues C60, C62, C75, and C78 each contribute to the Zn(2+) site. D450, D452, and D454 together coordinate Mg(2+). The Zn(2+) site is built by C818, C892, C899, and C902.

Belongs to the RNA polymerase beta' chain family. The RNAP catalytic core consists of 2 alpha, 1 beta, 1 beta' and 1 omega subunit. When a sigma factor is associated with the core the holoenzyme is formed, which can initiate transcription. Requires Mg(2+) as cofactor. Zn(2+) is required as a cofactor.

It catalyses the reaction RNA(n) + a ribonucleoside 5'-triphosphate = RNA(n+1) + diphosphate. Functionally, DNA-dependent RNA polymerase catalyzes the transcription of DNA into RNA using the four ribonucleoside triphosphates as substrates. The sequence is that of DNA-directed RNA polymerase subunit beta' from Lactococcus lactis subsp. cremoris (strain SK11).